An 89-amino-acid polypeptide reads, in one-letter code: Small ribosomal subunit protein uS15 (89 aa).

The segment covering 1–11 (MSITAERKAEV) has biased composition (basic and acidic residues). The segment at 1–24 (MSITAERKAEVIKTNAKKAGDTGS) is disordered.

The protein belongs to the universal ribosomal protein uS15 family. Part of the 30S ribosomal subunit. Forms a bridge to the 50S subunit in the 70S ribosome, contacting the 23S rRNA.

Functionally, one of the primary rRNA binding proteins, it binds directly to 16S rRNA where it helps nucleate assembly of the platform of the 30S subunit by binding and bridging several RNA helices of the 16S rRNA. Its function is as follows. Forms an intersubunit bridge (bridge B4) with the 23S rRNA of the 50S subunit in the ribosome. The protein is Small ribosomal subunit protein uS15 of Afipia carboxidovorans (strain ATCC 49405 / DSM 1227 / KCTC 32145 / OM5) (Oligotropha carboxidovorans).